The chain runs to 139 residues: MIIGIGSDLIDIRRIENSLQRFGERFVNRCFTDIEIAKSDGRKNRAASYAKRFAAKEACSKALGTGLAQGVFWKEMGVVNLPGGKPTMQLTGGAAARLREMLPVGHRAAIHLTITDDFPLAQAFVIIEALPVAPAEGTV.

The Mg(2+) site is built by Asp-8 and Glu-57.

This sequence belongs to the P-Pant transferase superfamily. AcpS family. It depends on Mg(2+) as a cofactor.

The protein resides in the cytoplasm. The enzyme catalyses apo-[ACP] + CoA = holo-[ACP] + adenosine 3',5'-bisphosphate + H(+). In terms of biological role, transfers the 4'-phosphopantetheine moiety from coenzyme A to a Ser of acyl-carrier-protein. The chain is Holo-[acyl-carrier-protein] synthase from Sinorhizobium medicae (strain WSM419) (Ensifer medicae).